The chain runs to 424 residues: 3-ketoacyl-CoA thiolase B, peroxisomal (424 aa).

The N-terminal 26 residues, 1–26, are a transit peptide targeting the peroxisome; the sequence is MHRLQVVLGHLAGRSESSSALQAAPC. The tract at residues 1–26 is PTS2-type peroxisomal targeting signal; sequence MHRLQVVLGHLAGRSESSSALQAAPC. The active-site Acyl-thioester intermediate is C123. K173 and K234 each carry N6-acetyllysine. CoA contacts are provided by R249, T252, and S276. The active-site Proton donor/acceptor is the C408.

This sequence belongs to the thiolase-like superfamily. Thiolase family. Homodimer. Interacts (via PTS2-type peroxisomal targeting signal region) with PEX7; leading to its translocation into peroxisomes.

Its subcellular location is the peroxisome. It catalyses the reaction an acyl-CoA + acetyl-CoA = a 3-oxoacyl-CoA + CoA. It carries out the reaction 2 acetyl-CoA = acetoacetyl-CoA + CoA. The catalysed reaction is hexanoyl-CoA + acetyl-CoA = 3-oxooctanoyl-CoA + CoA. The enzyme catalyses tetradecanoyl-CoA + acetyl-CoA = 3-oxohexadecanoyl-CoA + CoA. It catalyses the reaction 3-oxohexadecanedioyl-CoA + CoA = tetradecanedioyl-CoA + acetyl-CoA. It carries out the reaction 3-oxo-(6Z,9Z,12Z,15Z,18Z,21Z)-tetracosahexaenoyl-CoA + CoA = (4Z,7Z,10Z,13Z,16Z,19Z)-docosahexaenoyl-CoA + acetyl-CoA. It functions in the pathway lipid metabolism; peroxisomal fatty acid beta-oxidation. Functionally, responsible for the thiolytic cleavage of straight chain 3-keto fatty acyl-CoAs (3-oxoacyl-CoAs). Plays an important role in fatty acid peroxisomal beta-oxidation. Catalyzes the cleavage of short, medium, long, and very long straight chain 3-oxoacyl-CoAs. Medium chain straight 3-oxoacyl-CoAs are preferred substrates. The chain is 3-ketoacyl-CoA thiolase B, peroxisomal from Rattus norvegicus (Rat).